The sequence spans 92 residues: Signal recognition particle 19 kDa protein (92 aa).

This sequence belongs to the SRP19 family. Part of the signal recognition particle protein translocation system, which is composed of SRP and FtsY. Archaeal SRP consists of a 7S RNA molecule of 300 nucleotides and two protein subunits: SRP54 and SRP19.

The protein localises to the cytoplasm. Functionally, involved in targeting and insertion of nascent membrane proteins into the cytoplasmic membrane. Binds directly to 7S RNA and mediates binding of the 54 kDa subunit of the SRP. This is Signal recognition particle 19 kDa protein from Methanosphaera stadtmanae (strain ATCC 43021 / DSM 3091 / JCM 11832 / MCB-3).